The primary structure comprises 990 residues: DNA polymerase (990 aa).

The disordered stretch occupies residues 936 to 976; sequence PSDDAARKRARAGPSALRKQKAASNDEDSSDEDDEDCSQAI. Acidic residues predominate over residues 960 to 972; it reads NDEDSSDEDDEDC.

This sequence belongs to the DNA polymerase type-B family.

The catalysed reaction is DNA(n) + a 2'-deoxyribonucleoside 5'-triphosphate = DNA(n+1) + diphosphate. Functionally, replicates the viral genome, host DNA polymerases cannot substitute for the viral enzyme in this process. The polypeptide is DNA polymerase (POL) (Choristoneura fumiferana (Spruce budworm moth)).